A 33-amino-acid polypeptide reads, in one-letter code: Brevinin-2JD (33 aa).

C27 and C33 form a disulfide bridge.

In terms of tissue distribution, expressed by the skin glands.

It is found in the secreted. In terms of biological role, has antibacterial activity against E.coli ATCC 25992 (MIC=38 uM), E.coli CIB 84492 (MIC=38 uM), S.aureus ATCC 25923 (MIC=19 uM) and S.aureus CIB 85462 (MIC=19 uM). Has antifungal activity against C.albicans (MIC=19 uM). Has weak hemolytic activity against rabbit erythrocytes. The chain is Brevinin-2JD from Odorrana jingdongensis (Jingdong frog).